A 591-amino-acid polypeptide reads, in one-letter code: Inactive metallocarboxypeptidase ECM14 (591 aa).

An N-terminal signal peptide occupies residues 1–21; the sequence is MRLFSHLAVLAILACAVPITA. Residues 22 to 175 constitute a propeptide that is removed on maturation; the sequence is IPSFLSNSYP…QTIYESYPSS (154 aa). In terms of domain architecture, Peptidase M14 spans 203–523; sequence DYQPFSVIVP…NAVMVLGRFL (321 aa). Zn(2+) is bound by residues His-265 and Glu-268. Substrate is bound by residues 265 to 268, Arg-323, and 340 to 341; these read HARE and DR. Cys-334 and Cys-357 are joined by a disulfide. N-linked (GlcNAc...) asparagine glycans are attached at residues Asn-350, Asn-381, and Asn-386. His-397 contributes to the Zn(2+) binding site. 398–399 lines the substrate pocket; the sequence is SY. The tract at residues 533 to 591 is disordered; sequence DWEDESQRPKADEDDIPSENELDENDDSWIPYDYRNHDDQNEGEGYDNDEWGFRRRRKR. Acidic residues-rich tracts occupy residues 544–559 and 573–582; these read DEDD…ENDD and NEGEGYDNDE.

This sequence belongs to the peptidase M14 family. Zn(2+) is required as a cofactor.

Its subcellular location is the vacuole. The protein localises to the secreted. Its function is as follows. Inactive carboxypeptidase that may play a role in cell wall organization and biogenesis. This is Inactive metallocarboxypeptidase ECM14 (ECM14) from Paracoccidioides brasiliensis (strain Pb18).